The sequence spans 641 residues: MYLTIITLPLFAFLTVGVIGRKLGVRGSQIITSLSIIISAILSLYGFYEIVLLNNLGPITIYLSPWMNVIGAHADWAFYFDSISITMCVVVSSISSLVHLYSIGYMQGDPHIQRFFSYLSLFTFFMLLLVTGNNYLLMFVGWEGIGVSSYLLINFWFTRIQANKASMQAMLVNRVGDLGFVLGLFGIFWLFGSSDYDTVGIIAYKLDEQYITIVTLFLLIAAIGKSAQLGLHTWLPSAMEGPTPVSALIHAATLVTAGVYLILRSSPLFELAPTSLICVCVIGSLTAIFAATTGLFQNDLKRVIAYSTCSQLGYMVFALGLSQYEVAFFHLFNHAYFKALLFLSAGSIIHALHDEQDMRKMGGLVNILPFTYTMILIGSLSLMALPFLTGYYSKDAILEVAYGQFLVTGTFTYWLGTITATITAFYSSKALILGFFGTPNGSKKIYNTIHEAPLIMSIPLFLLSICSIFIGYITNKHLSVIGIGSSGIISGGVGTLRDHYLGFDIEFISTSFGVQFYPLFASLLGISLALIVLKDPKKMHSIEKPEGLLNTVNITRWLSSKSYWFDNVYNTVLISGSLHFGGIFARDIDKGFLSLLGPQGLQQLLITISRFFAIKIDTGFIPHYASIIIIIPIFIILSIFI.

17 helical membrane passes run 1-21 (MYLT…VIGR), 33-53 (SLSI…IVLL), 59-79 (ITIY…WAFY), 83-103 (ISIT…LYSI), 121-141 (LFTF…MFVG), 175-195 (VGDL…GSSD), 211-231 (ITIV…QLGL), 243-263 (TPVS…YLIL), 276-296 (LICV…TGLF), 303-322 (VIAY…LGLS), 367-387 (ILPF…ALPF), 405-425 (FLVT…ITAF), 453-473 (PLIM…IGYI), 476-496 (KHLS…VGTL), 512-532 (FGVQ…ALIV), 564-584 (WFDN…GGIF), and 621-641 (IPHY…SIFI).

This sequence belongs to the complex I subunit 5 family.

Its subcellular location is the mitochondrion inner membrane. The catalysed reaction is a ubiquinone + NADH + 5 H(+)(in) = a ubiquinol + NAD(+) + 4 H(+)(out). In terms of biological role, core subunit of the mitochondrial membrane respiratory chain NADH dehydrogenase (Complex I) that is believed to belong to the minimal assembly required for catalysis. Complex I functions in the transfer of electrons from NADH to the respiratory chain. The immediate electron acceptor for the enzyme is believed to be ubiquinone. The sequence is that of NADH-ubiquinone oxidoreductase chain 5 (ND5) from Allomyces macrogynus.